A 186-amino-acid polypeptide reads, in one-letter code: Pyridoxal 5'-phosphate synthase subunit PdxT (186 aa).

An L-glutamine-binding site is contributed by 47–49; the sequence is GES. Cysteine 79 acts as the Nucleophile in catalysis. L-glutamine is bound by residues arginine 106 and 134–135; that span reads IR. Catalysis depends on charge relay system residues histidine 170 and glutamate 172.

This sequence belongs to the glutaminase PdxT/SNO family. As to quaternary structure, in the presence of PdxS, forms a dodecamer of heterodimers. Only shows activity in the heterodimer.

The catalysed reaction is aldehydo-D-ribose 5-phosphate + D-glyceraldehyde 3-phosphate + L-glutamine = pyridoxal 5'-phosphate + L-glutamate + phosphate + 3 H2O + H(+). It catalyses the reaction L-glutamine + H2O = L-glutamate + NH4(+). It functions in the pathway cofactor biosynthesis; pyridoxal 5'-phosphate biosynthesis. Catalyzes the hydrolysis of glutamine to glutamate and ammonia as part of the biosynthesis of pyridoxal 5'-phosphate. The resulting ammonia molecule is channeled to the active site of PdxS. This Methanothrix thermoacetophila (strain DSM 6194 / JCM 14653 / NBRC 101360 / PT) (Methanosaeta thermophila) protein is Pyridoxal 5'-phosphate synthase subunit PdxT.